The following is a 126-amino-acid chain: Holo-[acyl-carrier-protein] synthase (126 aa).

Mg(2+)-binding residues include Asp9 and Glu58.

Belongs to the P-Pant transferase superfamily. AcpS family. Requires Mg(2+) as cofactor.

The protein resides in the cytoplasm. The enzyme catalyses apo-[ACP] + CoA = holo-[ACP] + adenosine 3',5'-bisphosphate + H(+). Functionally, transfers the 4'-phosphopantetheine moiety from coenzyme A to a Ser of acyl-carrier-protein. The sequence is that of Holo-[acyl-carrier-protein] synthase from Buchnera aphidicola subsp. Acyrthosiphon pisum (strain APS) (Acyrthosiphon pisum symbiotic bacterium).